The sequence spans 61 residues: Probable tautomerase SAV1363 (61 aa).

The Proton acceptor; via imino nitrogen role is filled by proline 2.

This sequence belongs to the 4-oxalocrotonate tautomerase family.

The sequence is that of Probable tautomerase SAV1363 from Staphylococcus aureus (strain Mu50 / ATCC 700699).